We begin with the raw amino-acid sequence, 358 residues long: Arogenate dehydrogenase 2, chloroplastic (358 aa).

A chloroplast-targeting transit peptide spans 1 to 36 (MLLHFSPAKPLISPPNLRRNSPTFLISPPRSLRIRA). The region spanning 59 to 338 (LKIAVLGFGN…KKTEQKLLND (280 aa)) is the Prephenate/arogenate dehydrogenase domain. A disordered region spans residues 336 to 358 (LNDGGVVPMNDISSSSSSSSSSS). Low complexity predominate over residues 348–358 (SSSSSSSSSSS).

Belongs to the prephenate/arogenate dehydrogenase family. In terms of tissue distribution, expressed in roots, stems, leaves, flowers, siliques and seeds. More abundant in seeds.

The protein resides in the plastid. The protein localises to the chloroplast. It catalyses the reaction L-arogenate + NADP(+) = L-tyrosine + CO2 + NADPH. Its pathway is amino-acid biosynthesis; L-tyrosine biosynthesis; L-tyrosine from L-arogenate (NADP(+) route): step 1/1. Its function is as follows. Involved in the biosynthesis of tyrosine. Has a weak prephenate dehydrogenase activity. In Arabidopsis thaliana (Mouse-ear cress), this protein is Arogenate dehydrogenase 2, chloroplastic (TYRAAT2).